The sequence spans 445 residues: UNC93-like protein MFSD11 (445 aa).

The chain crosses the membrane as a helical span at residues 8–28 (LLNIVILGVGFMFMFTAFQTS). N40 carries N-linked (GlcNAc...) asparagine glycosylation. Transmembrane regions (helical) follow at residues 52-72 (LAIIYSVFSASNLIAPSVIAV), 74-94 (GCQMSMFLSGLLYSAYIAMFI), 98-118 (TWSFYTLSVLIGIAAAVLWTA), and 138-158 (IFWALLQFSMLFGNLYIYLAW). The N-linked (GlcNAc...) asparagine glycan is linked to N163. 7 helical membrane passes run 170-190 (RTVFIALTVISLVGSVLFFLI), 239-259 (MLLLSILVAYTGLELTFYSGV), 277-297 (LIGLSGIFVGLGEVLGGGLFG), 309-329 (PVVILGVVVHFLAFYMIYLYM), 343-363 (LSAFINPSKTLALACSFLLGL), 385-405 (APAFAVFKFVQSVSAAVAFFY), and 415-435 (LLILVIFGFFGTISFFFVEWG).

Belongs to the unc-93 family.

It is found in the membrane. In Xenopus laevis (African clawed frog), this protein is UNC93-like protein MFSD11 (mfsd11).